The chain runs to 281 residues: ATP phosphoribosyltransferase (281 aa).

Belongs to the ATP phosphoribosyltransferase family. Long subfamily. Mg(2+) serves as cofactor.

The protein resides in the cytoplasm. The enzyme catalyses 1-(5-phospho-beta-D-ribosyl)-ATP + diphosphate = 5-phospho-alpha-D-ribose 1-diphosphate + ATP. Its pathway is amino-acid biosynthesis; L-histidine biosynthesis; L-histidine from 5-phospho-alpha-D-ribose 1-diphosphate: step 1/9. Its activity is regulated as follows. Feedback inhibited by histidine. Its function is as follows. Catalyzes the condensation of ATP and 5-phosphoribose 1-diphosphate to form N'-(5'-phosphoribosyl)-ATP (PR-ATP). Has a crucial role in the pathway because the rate of histidine biosynthesis seems to be controlled primarily by regulation of HisG enzymatic activity. The sequence is that of ATP phosphoribosyltransferase from Salinispora tropica (strain ATCC BAA-916 / DSM 44818 / JCM 13857 / NBRC 105044 / CNB-440).